The sequence spans 742 residues: 2'-5'-oligoadenylate synthase 2 (742 aa).

The interval 1–35 is disordered; it reads MGNWLTGNWSSDRSSGYSSGWSPGGSSGVPSGPVH. Gly-2 is lipidated: N-myristoyl glycine. Positions 10-21 are enriched in low complexity; it reads SSDRSSGYSSGW. OAS domain regions lie at residues 60 to 374 and 382 to 721; these read VPSQ…YWDV and TPSH…WKVP. Lys-417 is modified (N6-acetyllysine). Ser-436 lines the ATP pocket. The Mg(2+) site is built by Asp-448, Asp-450, and Asp-519. Positions 582 and 585 each coordinate ATP.

The protein belongs to the 2-5A synthase family. Homodimer. Mg(2+) serves as cofactor. Myristoylation is not essential for its activity. Post-translationally, glycosylated. Glycosylation is essential for its activity. Expressed in the uterus. Expressed in mammary glands: expressed at low level before the establishment of lactation, then expression strongly increases, and subsequently decreases during early involution.

It localises to the cytoplasm. The protein localises to the perinuclear region. It catalyses the reaction 3 ATP = 5'-triphosphoadenylyl-(2'-&gt;5')-adenylyl-(2'-&gt;5')-adenosine + 2 diphosphate. With respect to regulation, produced as a latent enzyme which is activated by double stranded RNA (dsRNA) generated during the course of viral infection. The dsRNA activator must be at least 15 nucleotides long, and no modification of the 2'-hydroxyl group is tolerated. ssRNA or dsDNA do not act as activators. Strongly inhibited by copper, iron and zinc ions. Partially inhibited by cobalt and nickel ions. Interferon-induced, dsRNA-activated antiviral enzyme which plays a critical role in cellular innate antiviral response. Activated by detection of double stranded RNA (dsRNA): polymerizes higher oligomers of 2'-5'-oligoadenylates (2-5A) from ATP which then bind to the inactive monomeric form of ribonuclease L (RNASEL) leading to its dimerization and subsequent activation. Activation of RNASEL leads to degradation of cellular as well as viral RNA, resulting in the inhibition of protein synthesis, thus terminating viral replication. Can mediate the antiviral effect via the classical RNASEL-dependent pathway or an alternative antiviral pathway independent of RNASEL. In addition, it may also play a role in other cellular processes such as apoptosis, cell growth, differentiation and gene regulation. May act as a negative regulator of lactation, stopping lactation in virally infected mammary gland lobules, thereby preventing transmission of viruses to neonates. Non-infected lobules would not be affected, allowing efficient pup feeding during infection. The polypeptide is 2'-5'-oligoadenylate synthase 2 (Mus musculus (Mouse)).